The chain runs to 146 residues: Envelope protein OPG155 (146 aa).

Residues 1–21 (MNSLSIFFIVVATAAVCLLFI) traverse the membrane as a helical; Signal-anchor for type III membrane protein segment. At 22–146 (QGYSIYENYG…AECQFLKSVL (125 aa)) the chain is on the intravirion side.

It belongs to the orthopoxvirus OPG155 protein family. Part of a stable entry-fusion complex (EFC) which is at least composed of proteins OPG143, OPG147, OPG155, OPG086, OPG094, OPG107, OPG104, and OPG099. Formation of the viral membrane is necessary for the assembly of the complex. Interacts directly with protein OPG107. In terms of processing, contains two intramolecular disulfide bonds. They are created by the viral disulfide bond formation pathway, a poxvirus-specific pathway that operates on the cytoplasmic side of the MV membranes.

It is found in the virion membrane. In terms of biological role, envelope protein required for virus entry into host cell and for cell-cell fusion (syncytium formation). This Vaccinia virus (strain Ankara) (VACV) protein is Envelope protein OPG155 (OPG155).